The chain runs to 780 residues: MATSNLLKNKGSLQFEDKWDFMRPIVLKLLRQESVTKQQWFDLFSDVHAVCLWDDKGPAKIHQALKEDILEFIKQAQARVLSHQDDTALLKAYIVEWRKFFTQCDILPKPFCQLEITLMGKQGSNKKSNVEDSIVRKLMLDTWNESIFSNIKNRLQDSAMKLVHAERLGEAFDSQLVIGVRESYVNLCSNPEDKLQIYRDNFEKAYLDSTERFYRTQAPSYLQQNGVQNYMKYADAKLKEEEKRALRYLETRRECNSVEALMECCVNALVTSFKETILAECQGMIKRNETEKLHLMFSLMDKVPNGIEPMLKDLEEHIISAGLADMVAAAETITTDSEKYVEQLLTLFNRFSKLVKEAFQDDPRFLTARDKAYKAVVNDATIFKLELPLKQKGVGLKTQPESKCPELLANYCDMLLRKTPLSKKLTSEEIEAKLKEVLLVLKYVQNKDVFMRYHKAHLTRRLILDISADSEIEENMVEWLREVGMPADYVNKLARMFQDIKVSEDLNQAFKEMHKNNKLALPADSVNIKILNAGAWSRSSEKVFVSLPTELEDLIPEVEEFYKKNHSGRKLHWHHLMSNGIITFKNEVGQYDLEVTTFQLAVLFAWNQRPREKISFENLKLATELPDAELRRTLWSLVAFPKLKRQVLLYEPQVNSPKDFTEGTLFSVNQEFSLIKNAKVQKRGKINLIGRLQLTTERMREEENEGIVQLRILRTQEAIIQIMKMRKKISNAQLQTELVEILKNMFLPQKKMIKEQIEWLIEHKYIRRDESDINTFIYMA.

Ser-34 is subject to Phosphoserine. Thr-210 carries the post-translational modification Phosphothreonine. Positions 711–772 (RILRTQEAII…HKYIRRDESD (62 aa)) constitute a Cullin neddylation domain. Lys-724 participates in a covalent cross-link: Glycyl lysine isopeptide (Lys-Gly) (interchain with G-Cter in NEDD8).

Belongs to the cullin family. As to quaternary structure, component of multiple cullin-5-RING E3 ubiquitin-protein ligase complexes (ECS complexes, also named CRL5 complexes) formed of CUL5, Elongin BC (ELOB and ELOC), RNF7/RBX2 and a variable SOCS box domain-containing protein as substrate-specific recognition component. CUL5-containing ECS complexes specifically contain RNF7/RBX2, and not RBX1, as catalytic subunit. Component of the ECS(ASB2) complex with the substrate recognition component ASB2. Component of the ECS(ASB6) complex with the substrate recognition component ASB6. Component of the ECS(ASB7) complex with the substrate recognition component ASB7. Component of the ECS(ASB9) complex with the substrate recognition component ASB9. Component of the ECS(ASB11) complex with the substrate recognition component ASB11. Component of the ECS(ASB12) complex with the substrate recognition component ASB12. Component of the ECS(LRRC41) complex with the substrate recognition component LRRC41. Component of the ECS(SOCS1) complex with the substrate recognition component SOCS1. Component of the ECS(SOCS2) complex with the substrate recognition component SOCS2. Component of the ECS(WSB1) complex with the substrate recognition subunit WSB1. Component of the ECS(SOCS3) complex with the substrate recognition component SOCS3. Component of the ECS(SOCS7) complex with the substrate recognition component SOCS7. Component of the ECS(SPSB1) complex with the substrate recognition component SPSB1. Component of the ECS(SPSB3) complex with the substrate recognition component SPSB3. Component of the ECS(SPSB2) complex with the substrate recognition component SPSB2. Component of the ECS(SPSB4) complex with the substrate recognition component SPSB4. Component of the ECS(RAB40) complex with the substrate recognition subunit RAB40A, RAB40B or RAB40C. Component of the ECS(KLHDC1) complex with the substrate recognition component KLHDC1. Component of the ECS(PCMTD1) complex with the substrate recognition subunit PCMTD1. May also form complexes containing RBX1 and ELOA or VHL; additional evidence is however required to confirm this result in vivo. Interacts (when neddylated) with ARIH2; leading to activate the E3 ligase activity of ARIH2. Interacts with ERCC6; the interaction is induced by DNA damaging agents or inhibitors of RNA polymerase II elongation. Interacts with ELOA (via the BC-box). Interacts (unneddylated form) with DCUN1D1, DCUN1D2, DCUN1D3, DCUN1D4 and DCUN1D5; these interactions promote the cullin neddylation. In terms of assembly, (Microbial infection) Interacts (via the substrate recognition component) with HIV-1 Vif; forming an active cullin-5-RING E3 ubiquitin-protein ligase complex (ECS complex). (Microbial infection) Interacts (via the substrate recognition component) with human adenovirus 5 proteins E1B-55K and E4-orf6. As to quaternary structure, (Microbial infection) Interacts with herpes virus 8 protein LANA1; this interaction promotes the degradation of NF-kappa-B component RELA. In terms of assembly, (Microbial infection) Interacts with molluscum contagiosum virus protein MC132; this interaction promotes the degradation of NF-kappa-B component RELA. Post-translationally, neddylated; which enhances the ubiquitination activity of ECS complexes and prevents binding of the inhibitor CAND1. Deneddylated via its interaction with the COP9 signalosome (CSN).

Its subcellular location is the nucleus. It participates in protein modification; protein ubiquitination. Its function is as follows. Core component of multiple cullin-5-RING E3 ubiquitin-protein ligase complexes (ECS complexes, also named CRL5 complexes), which mediate the ubiquitination and subsequent proteasomal degradation of target proteins. Acts a scaffold protein that contributes to catalysis through positioning of the substrate and the ubiquitin-conjugating enzyme. The functional specificity of the E3 ubiquitin-protein ligase complex depends on the variable SOCS box-containing substrate recognition component. Acts as a key regulator of neuron positioning during cortex development: component of various SOCS-containing ECS complexes, such as the ECS(SOCS7) complex, that regulate reelin signaling by mediating ubiquitination and degradation of DAB1. ECS(SOCS1) seems to direct ubiquitination of JAK2. The ECS(SOCS2) complex mediates the ubiquitination and subsequent proteasomal degradation of phosphorylated EPOR and GHR. The ECS(SPSB3) complex catalyzes ubiquitination of nuclear CGAS. ECS(KLHDC1) complex is part of the DesCEND (destruction via C-end degrons) pathway and mediates ubiquitination and degradation of truncated SELENOS selenoprotein produced by failed UGA/Sec decoding, which ends with a glycine. The ECS(ASB9) complex mediates ubiquitination and degradation of CKB. As part of some ECS complex, promotes 'Lys-11'-linked ubiquitination and degradation of BTRC. As part of a multisubunit ECS complex, polyubiquitinates monoubiquitinated POLR2A. As part of the ECS(RAB40C) complex, mediates ANKRD28 ubiquitination and degradation, thereby inhibiting protein phosphatase 6 (PP6) complex activity and focal adhesion assembly during cell migration. As part of the ECS(RAB40A) complex, mediates RHOU 'Lys-48'-linked ubiquitination and degradation, thus inhibiting focal adhesion disassembly during cell migration. As part of the ECS(RAB40B) complex, mediates LIMA1/EPLIN and RAP2 ubiquitination, thereby regulating actin cytoskeleton dynamics and stress fiber formation during cell migration. May form a cell surface vasopressin receptor. Functionally, (Microbial infection) Following infection by HIV-1 virus, CUL5 associates with HIV-1 Vif proteins and forms a cullin-5-RING E3 ubiquitin-protein ligase complex (ECS complex) that catalyzes ubiquitination and degradation of APOBEC3F and APOBEC3G. The complex can also ubiquitinate APOBEC3H to some extent. In terms of biological role, (Microbial infection) Seems to be involved in proteasomal degradation of p53/TP53 stimulated by adenovirus E1B-55 kDa protein. The sequence is that of Cullin-5 from Homo sapiens (Human).